We begin with the raw amino-acid sequence, 122 residues long: MQRIMLRAKLHRVTVTEADLHYEGSCGIDEDLLDAAGMREFERIELYNVTNGERFDTYIIKAARGSGAISLNGAAARRAQVGDLLIICTYGPMSEEQSAAHKPQVVLVDDANRVKEIRKFPA.

The active-site Schiff-base intermediate with substrate; via pyruvic acid is S25. A Pyruvic acid (Ser) modification is found at S25. T57 lines the substrate pocket. Catalysis depends on Y58, which acts as the Proton donor. Residue 73-75 (GAA) coordinates substrate.

The protein belongs to the PanD family. In terms of assembly, heterooctamer of four alpha and four beta subunits. Requires pyruvate as cofactor. Is synthesized initially as an inactive proenzyme, which is activated by self-cleavage at a specific serine bond to produce a beta-subunit with a hydroxyl group at its C-terminus and an alpha-subunit with a pyruvoyl group at its N-terminus.

The protein localises to the cytoplasm. The catalysed reaction is L-aspartate + H(+) = beta-alanine + CO2. It participates in cofactor biosynthesis; (R)-pantothenate biosynthesis; beta-alanine from L-aspartate: step 1/1. Its function is as follows. Catalyzes the pyruvoyl-dependent decarboxylation of aspartate to produce beta-alanine. This is Aspartate 1-decarboxylase from Bordetella pertussis (strain Tohama I / ATCC BAA-589 / NCTC 13251).